The sequence spans 359 residues: MPLSRLIIQQFRNIKACDIQLSAGFNFLIGPNGSGKTSVLEAIYLLGHGRSFKSSLTGRVIQNECDELFVHGRFLNSDQFELPIGINKQRDGSTEVKIGGQSGQKLAQLAQVLPLQLIHPEGFDLLTDGPKHRRAFIDWGVFHTEPAFYDAWGRFKRLNKQRNALLKTASSYRELSYWDQEMARLAENISQWRSLYIEQMKTVAETICQTFLPEFEIQLKYYRGWDKDTPYQEILEKNFERDQSLGYTFSGPNKADLRIKVNGTPVEDVLSRGQLKLMVCALRVAQGQHLTAMTGKQCIYLIDDFASELDSQRRKRLADCLKETGAQVFVSSITENQIADMLDDNGKLFHVEHGRIESN.

ATP is bound at residue 30–37 (GPNGSGKT).

The protein belongs to the RecF family.

It localises to the cytoplasm. Its function is as follows. The RecF protein is involved in DNA metabolism; it is required for DNA replication and normal SOS inducibility. RecF binds preferentially to single-stranded, linear DNA. It also seems to bind ATP. The protein is DNA replication and repair protein RecF of Vibrio parahaemolyticus serotype O3:K6 (strain RIMD 2210633).